Reading from the N-terminus, the 342-residue chain is S-adenosylmethionine:tRNA ribosyltransferase-isomerase (342 aa).

This sequence belongs to the QueA family. As to quaternary structure, monomer.

The protein resides in the cytoplasm. The enzyme catalyses 7-aminomethyl-7-carbaguanosine(34) in tRNA + S-adenosyl-L-methionine = epoxyqueuosine(34) in tRNA + adenine + L-methionine + 2 H(+). The protein operates within tRNA modification; tRNA-queuosine biosynthesis. Transfers and isomerizes the ribose moiety from AdoMet to the 7-aminomethyl group of 7-deazaguanine (preQ1-tRNA) to give epoxyqueuosine (oQ-tRNA). This Listeria innocua serovar 6a (strain ATCC BAA-680 / CLIP 11262) protein is S-adenosylmethionine:tRNA ribosyltransferase-isomerase.